Reading from the N-terminus, the 672-residue chain is Probable copper-transporting P-type ATPase B (672 aa).

Over residues 1-17 the composition is skewed to basic and acidic residues; the sequence is MEHHSHQEHENHTSHGN. Residues 1–22 are disordered; sequence MEHHSHQEHENHTSHGNHEHHH. Transmembrane regions (helical) follow at residues 30–50, 55–75, 93–113, 125–145, 282–302, and 313–333; these read FFIS…MGVK, ISFT…FFYG, GMMT…LYAF, TMDF…GHWI, GYLF…WMLI, and LVTV…PLVT. The 4-aspartylphosphate intermediate role is filled by Asp365. Mg(2+) contacts are provided by Asp563 and Asp567. Transmembrane regions (helical) follow at residues 621-643 and 647-669; these read LWWG…ASIG and SPAV…AFTL.

Belongs to the cation transport ATPase (P-type) (TC 3.A.3) family. Type IB subfamily.

The protein localises to the cell membrane. It catalyses the reaction Cu(+)(in) + ATP + H2O = Cu(+)(out) + ADP + phosphate + H(+). Functionally, involved in copper transport. This is Probable copper-transporting P-type ATPase B (copB) from Staphylococcus aureus.